A 326-amino-acid polypeptide reads, in one-letter code: uncharacterized protein (326 aa).

The tract at residues 293 to 326 (HRNYDANHSTSGEEENSGSRSRIAELSQSTIHRR) is disordered.

This is an uncharacterized protein from Oryza latifolia (Indian wild rice).